The chain runs to 93 residues: DNA-directed RNA polymerase subunit omega (93 aa).

Belongs to the RNA polymerase subunit omega family. The RNAP catalytic core consists of 2 alpha, 1 beta, 1 beta' and 1 omega subunit. When a sigma factor is associated with the core the holoenzyme is formed, which can initiate transcription.

It catalyses the reaction RNA(n) + a ribonucleoside 5'-triphosphate = RNA(n+1) + diphosphate. Its function is as follows. Promotes RNA polymerase assembly. Latches the N- and C-terminal regions of the beta' subunit thereby facilitating its interaction with the beta and alpha subunits. The chain is DNA-directed RNA polymerase subunit omega from Acinetobacter baylyi (strain ATCC 33305 / BD413 / ADP1).